The following is a 419-amino-acid chain: MSVAADMEVMARKAKEASRAMAAASGAAKDAFLAGLAGLLETRREGVLAANAADLEKARAAGMDAPRLDRLTLTPAVMDGMAKACREIIALPDPVGAIESMRPRPNGLLVGCMRVPLGVICMIYESRPNVTIDAAILCLKAGNAVILKGGSEALASNLALAGLLREALEASGLPADAAQLVPTADRAAVAALCKLDELIDVMIPRGGEGLIRAVVSQATMPVLKHYKGVCHAYIDSGADEARAETIVVNAKAQRPGVCNALECLLVHVDAAPTFLPRIGDALRRVGVTMRACPRSLPLLGEGAVAAMPEDFGHEFHDLILAVKVVDSLDEALTHIHRHGSGHTEVICTENHDRAMDFLRRADASMVGVNCSTRFNDGGELGLGAEIGISTSKLHSYGPMGLVELTSAKFVVLGQGQVRG.

It belongs to the gamma-glutamyl phosphate reductase family.

The protein localises to the cytoplasm. The catalysed reaction is L-glutamate 5-semialdehyde + phosphate + NADP(+) = L-glutamyl 5-phosphate + NADPH + H(+). The protein operates within amino-acid biosynthesis; L-proline biosynthesis; L-glutamate 5-semialdehyde from L-glutamate: step 2/2. In terms of biological role, catalyzes the NADPH-dependent reduction of L-glutamate 5-phosphate into L-glutamate 5-semialdehyde and phosphate. The product spontaneously undergoes cyclization to form 1-pyrroline-5-carboxylate. The polypeptide is Gamma-glutamyl phosphate reductase (Solidesulfovibrio magneticus (strain ATCC 700980 / DSM 13731 / RS-1) (Desulfovibrio magneticus)).